The sequence spans 181 residues: Large ribosomal subunit protein uL5c (181 aa).

The protein belongs to the universal ribosomal protein uL5 family. As to quaternary structure, part of the 50S ribosomal subunit; contacts the 5S rRNA.

Its subcellular location is the plastid. The protein localises to the chloroplast. Binds 5S rRNA, forms part of the central protuberance of the 50S subunit. In Guillardia theta (Cryptophyte), this protein is Large ribosomal subunit protein uL5c (rpl5).